Reading from the N-terminus, the 308-residue chain is Phenylcoumaran benzylic ether reductase 1 (308 aa).

NADP(+) contacts are provided by residues 11–17 (GGTGYIG), Arg36, and Arg45. Lys133 acts as the Proton acceptor in catalysis. Arg137 lines the NADP(+) pocket.

Belongs to the NmrA-type oxidoreductase family. Isoflavone reductase subfamily. As to expression, expressed in apical meristem and cotyledon veins of young seedlings. Expressed in vascular tissues of roots, leaves, stems and petals. Expressed in pollen grains. Expressed at low levels in cauline leaves and siliques.

It catalyses the reaction (-)-dehydrodiconiferyl alcohol + NADPH + H(+) = (S)-isodihydrodehydrodiconiferyl alcohol + NADP(+). The enzyme catalyses (+)-dehydrodiconiferyl alcohol + NADPH + H(+) = (R)-isodihydrodehydrodiconiferyl alcohol + NADP(+). The catalysed reaction is (2R,3S)-dihydrodehydrodiconiferyl alcohol + NADPH + H(+) = (S)-tetrahydrodehydrodiconiferyl alcohol + NADP(+). It carries out the reaction (2S,3R)-dihydrodehydrodiconiferyl alcohol + NADPH + H(+) = (R)-tetrahydrodehydrodiconiferyl alcohol + NADP(+). In terms of biological role, oxidoreductase involved in lignan biosynthesis. Catalyzes the NADPH-dependent reduction of phenylcoumaran benzylic ethers. Converts dehydrodiconiferyl alcohol (DDC) to isodihydrodehydrodiconiferyl alcohol (IDDDC), and dihydrodehydrodiconiferyl alcohol (DDDC) to tetrahydrodehydrodiconiferyl alcohol (TDDC). Plays an important role in the biosynthesis of secondary metabolites. In addition to the 8-5'-linked neolignan DDC, can reduce the 8-8'-linked lignans, pinoresinol, and lariciresinol, but with lower activities. The sequence is that of Phenylcoumaran benzylic ether reductase 1 from Arabidopsis thaliana (Mouse-ear cress).